The following is a 418-amino-acid chain: UDP-N-acetylglucosamine 1-carboxyvinyltransferase (418 aa).

A phosphoenolpyruvate-binding site is contributed by 22-23 (KN). Arg92 contributes to the UDP-N-acetyl-alpha-D-glucosamine binding site. Cys116 acts as the Proton donor in catalysis. A 2-(S-cysteinyl)pyruvic acid O-phosphothioketal modification is found at Cys116. 2 residues coordinate UDP-N-acetyl-alpha-D-glucosamine: Asp305 and Val327.

It belongs to the EPSP synthase family. MurA subfamily.

It localises to the cytoplasm. It carries out the reaction phosphoenolpyruvate + UDP-N-acetyl-alpha-D-glucosamine = UDP-N-acetyl-3-O-(1-carboxyvinyl)-alpha-D-glucosamine + phosphate. It functions in the pathway cell wall biogenesis; peptidoglycan biosynthesis. Functionally, cell wall formation. Adds enolpyruvyl to UDP-N-acetylglucosamine. The protein is UDP-N-acetylglucosamine 1-carboxyvinyltransferase of Endomicrobium trichonymphae.